Consider the following 299-residue polypeptide: MLFEQIARNKRHTLYVMAAFVILLAVIGLAVGYVFFNSAIAGLLVALIAAVFYMVLMISQSTDIVMSMNHGRELHQADDDPELWHIVEDMALVAKVPMPRVFIIDDESPNAFATGNDPEHAAVAVTTGIQARLTREEMEGVIGHEMSHVRNYDIRLQTIALALTAAISLLVNWGMNAFWWGGGRRSRDNDRDGNGAQVLLMILAIVVIILAPLAASLVQMALSRNREYLADAGSVELTRNPLGLISALEKIDDSQPMQAADPSSAALYISDPFKAKKSWTHLFDTHPPMADRITRLKNM.

2 consecutive transmembrane segments (helical) span residues V16–F36 and S38–I58. Position 144 (H144) interacts with Zn(2+). The active site involves E145. H148 serves as a coordination point for Zn(2+). 2 helical membrane passes run I159–W179 and V198–V218. A Zn(2+)-binding site is contributed by E227.

Belongs to the peptidase M48B family. Zn(2+) is required as a cofactor.

Its subcellular location is the cell membrane. This Lactiplantibacillus plantarum (strain ATCC BAA-793 / NCIMB 8826 / WCFS1) (Lactobacillus plantarum) protein is Protease HtpX homolog.